The primary structure comprises 138 residues: ATP synthase epsilon chain (138 aa).

The protein belongs to the ATPase epsilon chain family. In terms of assembly, F-type ATPases have 2 components, CF(1) - the catalytic core - and CF(0) - the membrane proton channel. CF(1) has five subunits: alpha(3), beta(3), gamma(1), delta(1), epsilon(1). CF(0) has three main subunits: a, b and c.

Its subcellular location is the cell membrane. In terms of biological role, produces ATP from ADP in the presence of a proton gradient across the membrane. The polypeptide is ATP synthase epsilon chain (Streptococcus equinus (Streptococcus bovis)).